The sequence spans 727 residues: Protein edg-1 (727 aa).

Residues 703–727 (FAESSVKPTTSSAYGNSSNFSRYAD) are disordered.

In terms of assembly, may interact with deps-1 and prg-1.

The protein resides in the cytoplasmic granule. Functionally, plays a role in regulating deps-1 cluster formation in the germline. The chain is Protein edg-1 from Caenorhabditis elegans.